The sequence spans 309 residues: MRKIIVGSRKSKLALTQTNWFIDQLKALGLPYEFEVKEIVTKGDVILDVTLSKVGGKGLFVKEIEHALLTKEIDMAVHSMKDMPAVLPEGLMIGCTPKRVDPRDAFISKSGASFKELAEGAILGTSSLRRSAQLLAARPDLQVKWIRGNIDTRLRKLKEEDYDAIILATAGLQRMGWDNEVITEHLDETLCVPAVGQGALAIECREDDKDLLQLLAHINDAVTEKTVAAERVFLHKLEGGCQVPIAGYATLTENDAIELTALVGSMDGSVLLKETVVGTDPEKVGLEAADRLIKQGAKELILAANKGQQ.

S-(dipyrrolylmethanemethyl)cysteine is present on Cys241.

This sequence belongs to the HMBS family. In terms of assembly, monomer. Dipyrromethane serves as cofactor.

It carries out the reaction 4 porphobilinogen + H2O = hydroxymethylbilane + 4 NH4(+). It functions in the pathway porphyrin-containing compound metabolism; protoporphyrin-IX biosynthesis; coproporphyrinogen-III from 5-aminolevulinate: step 2/4. Its function is as follows. Tetrapolymerization of the monopyrrole PBG into the hydroxymethylbilane pre-uroporphyrinogen in several discrete steps. The protein is Porphobilinogen deaminase of Bacillus thuringiensis (strain Al Hakam).